Consider the following 131-residue polypeptide: Chromatin accessibility complex protein 1 (131 aa).

N-acetylalanine is present on Ala2. A coiled-coil region spans residues 100-124; sequence ASKYLKMLKEEKREEDEENDNDNES. Lys102 carries the N6-acetyllysine modification. A disordered region spans residues 109-131; that stretch reads EEKREEDEENDNDNESDHDEADS. The segment covering 112–131 has biased composition (acidic residues); it reads REEDEENDNDNESDHDEADS. Ser124 carries the phosphoserine modification.

As to quaternary structure, heterodimer with POLE3; binds to DNA. Component of the CHRAC ISWI chromatin remodeling complex at least composed of SMARCA5/SNF2H, BAZ1A/ACF1, CHRAC1 and POLE3; the complex preferentially binds DNA through the CHRAC1-POLE3 heterodimer and possesses ATP-dependent nucleosome-remodeling activity. Within the complex, the heterodimer with POLE3 interacts with SMARCA5/SNF2H; the interaction is direct and enhances nucleosome sliding activity by the SMARCA5/SNF2H and BAZ1A/ACF1 interaction. Within the complex, the heterodimer with POLE3 interacts with BAZ1A/ACF1; the interactions are direct. In terms of tissue distribution, expressed in heart, brain, placenta, lung, liver, skeletal muscle, kidney and pancreas.

The protein localises to the nucleus. Functionally, forms a complex with DNA polymerase epsilon subunit POLE3 and binds naked DNA, which is then incorporated into chromatin, aided by the nucleosome remodeling activity of ISWI/SNF2H and ACF1. Does not enhance nucleosome sliding activity of the ACF-5 ISWI chromatin remodeling complex. The protein is Chromatin accessibility complex protein 1 (CHRAC1) of Homo sapiens (Human).